A 336-amino-acid chain; its full sequence is MATIKDVARLAGVSTTTVSHVINKTRFVAETTQEKVMEAVKQLNYAPSAVARSLKCNTTRTIGMLVTQSTNLFFSEVIDGVESYCYRQGYTLILCNTGGIYEKQRDYIRMLAEKRVDGILVMCSDLTQELQDMLDAHKDIPKVVMDWGPETSHADKIIDNSEEGGYLATKYLTDRGHTEIACLSGHFVKAACQERIQGFRRAMAEAKLTVNEDWILEGNFECDTAVLAADKIIAMDKRPTAVFCFNDTMALGLMSRLQQKGIRIPEDMSVIGYDNIELAEYFSPPLTTVHQPKRRVGKNAFEILLERIKDKEHERRIFEMHPEIVERDTVKDLTKS.

One can recognise an HTH lacI-type domain in the interval 2 to 56 (ATIKDVARLAGVSTTTVSHVINKTRFVAETTQEKVMEAVKQLNYAPSAVARSLKC). Positions 4–23 (IKDVARLAGVSTTTVSHVIN) form a DNA-binding region, H-T-H motif. Residues 48–56 (SAVARSLKC) mediate DNA binding. Residues F73, K189, F220, and D274 each contribute to the hypoxanthine site.

In terms of assembly, homodimer.

It participates in purine metabolism; purine nucleotide biosynthesis [regulation]. Functionally, is the main repressor of the genes involved in the de novo synthesis of purine nucleotides, regulating purB, purC, purEK, purF, purHD, purL, purMN and guaBA expression. PurR is allosterically activated to bind its cognate DNA by binding the purine corepressors, hypoxanthine or guanine, thereby effecting transcription repression. The polypeptide is HTH-type transcriptional repressor PurR (Vibrio cholerae serotype O1 (strain ATCC 39315 / El Tor Inaba N16961)).